Reading from the N-terminus, the 480-residue chain is ATP synthase subunit beta 1 (480 aa).

154–161 (GGAGVGKT) provides a ligand contact to ATP.

It belongs to the ATPase alpha/beta chains family. F-type ATPases have 2 components, CF(1) - the catalytic core - and CF(0) - the membrane proton channel. CF(1) has five subunits: alpha(3), beta(3), gamma(1), delta(1), epsilon(1). CF(0) has four main subunits: a(1), b(1), b'(1) and c(9-12).

It localises to the cell inner membrane. It carries out the reaction ATP + H2O + 4 H(+)(in) = ADP + phosphate + 5 H(+)(out). Functionally, produces ATP from ADP in the presence of a proton gradient across the membrane. The catalytic sites are hosted primarily by the beta subunits. This Bradyrhizobium sp. (strain BTAi1 / ATCC BAA-1182) protein is ATP synthase subunit beta 1.